The chain runs to 780 residues: Striatin (780 aa).

A coiled-coil region spans residues 53-120 (LHFLQHEWAR…QERAKYHKLK (68 aa)). A caveolin-binding region spans residues 55 to 63 (FLQHEWARF). Residues 124–150 (ELNQGDMKPPSYDSDEGNETEVQPQQN) form a disordered region. The residue at position 137 (Ser-137) is a Phosphoserine. Positions 149–166 (QNSQLMWKQGRQLLRQYL) are calmodulin-binding. Phosphothreonine is present on Thr-225. Ser-227, Ser-229, Ser-245, and Ser-259 each carry phosphoserine. Disordered regions lie at residues 289–310 (DFLVTSEEGDNESRSAGDGTDW) and 365–387 (DELPSLQPSVGSPSRPSSSRLPE). Over residues 299-310 (NESRSAGDGTDW) the composition is skewed to basic and acidic residues. 6 WD repeats span residues 461–500 (SHFDGIRALAFHPIEPVLITASEDHTLKMWNLQKTAPAKK), 514–553 (AHKGPVLCVVMSSNGEQCYSGGTDGLIQGWNTTNPNIDPY), 567–606 (GHTDAVWGLAYSAAHQRLLSCSADGTLRLWNTTEVAPALS), 662–701 (NSSCQINRVISHPTLPISITAHEDRHIKFYDNNTGKLIHS), 704–743 (AHLEAVTSLAVDPNGLYLMSGSHDCSIRLWNLESKTCIQE), and 750–780 (KFEESIHDVAFHPSKCYIASAGADALAKVFV).

This sequence belongs to the WD repeat striatin family. As to quaternary structure, part of the core of STRIPAK complexes composed of PP2A catalytic and scaffolding subunits, the striatins (PP2A regulatory subunits), the striatin-associated proteins MOB4, STRIP1 and STRIP2, PDCD10 and members of the STE20 kinases, such as STK24 and STK26. Interacts with CTTNBP2; this interaction may regulate dendritic spine distribution of STRN. Activation of glutamate receptors weakens the interaction with CTTNBP2. Preferentially expressed in brain.

It localises to the cytoplasm. Its subcellular location is the membrane. It is found in the cell projection. The protein resides in the dendritic spine. Its function is as follows. Calmodulin-binding scaffolding protein which is the center of the striatin-interacting phosphatase and kinase (STRIPAK) complexes. STRIPAK complexes have critical roles in protein (de)phosphorylation and are regulators of multiple signaling pathways including Hippo, MAPK, nuclear receptor and cytoskeleton remodeling. Different types of STRIPAK complexes are involved in a variety of biological processes such as cell growth, differentiation, apoptosis, metabolism and immune regulation. This is Striatin (STRN) from Homo sapiens (Human).